A 465-amino-acid polypeptide reads, in one-letter code: Glutathione reductase (465 aa).

The FAD site is built by Ser-16 and Gly-17. Glutathione is bound at residue Ser-16. Residue Arg-23 participates in glutathione binding. 4 residues coordinate FAD: Glu-42, Thr-49, Cys-50, and Lys-58. An intrachain disulfide couples Cys-50 to Cys-55. Tyr-108 is a binding site for glutathione. Gly-124 is an FAD binding site. Residues Ala-187, Ile-190, Glu-193, Arg-210, Arg-216, and Gly-276 each coordinate NADP(+). Residue Asp-318 coordinates FAD. Residue Leu-324 participates in NADP(+) binding. Thr-326 contacts FAD. Arg-334 lines the glutathione pocket. An NADP(+)-binding site is contributed by Val-357. Position 454 (His-454) interacts with FAD. His-454 functions as the Proton acceptor in the catalytic mechanism.

It belongs to the class-I pyridine nucleotide-disulfide oxidoreductase family. Requires FAD as cofactor.

The protein localises to the cytoplasm. It catalyses the reaction 2 glutathione + NADP(+) = glutathione disulfide + NADPH + H(+). In terms of biological role, catalyzes the reduction of glutathione disulfide (GSSG) to reduced glutathione (GSH). Constitutes the major mechanism to maintain a high GSH:GSSG ratio in the cytosol. The amount of GSH may affect the determination of cell fate. The polypeptide is Glutathione reductase (gsr) (Dictyostelium discoideum (Social amoeba)).